The following is a 218-amino-acid chain: NAD(P)H-quinone oxidoreductase subunit I (218 aa).

4Fe-4S ferredoxin-type domains are found at residues 55–84 (GRIH…VDWV) and 95–124 (RNYS…MTEE). Cysteine 64, cysteine 67, cysteine 70, cysteine 74, cysteine 104, cysteine 107, cysteine 110, and cysteine 114 together coordinate [4Fe-4S] cluster. Residues 192 to 218 (LSLQQDSLQGDEGESLQDAPDQDQPKG) are disordered.

This sequence belongs to the complex I 23 kDa subunit family. In terms of assembly, NDH-1 is composed of at least 11 different subunits. Requires [4Fe-4S] cluster as cofactor.

The protein localises to the cellular thylakoid membrane. The enzyme catalyses a plastoquinone + NADH + (n+1) H(+)(in) = a plastoquinol + NAD(+) + n H(+)(out). The catalysed reaction is a plastoquinone + NADPH + (n+1) H(+)(in) = a plastoquinol + NADP(+) + n H(+)(out). Its function is as follows. NDH-1 shuttles electrons from an unknown electron donor, via FMN and iron-sulfur (Fe-S) centers, to quinones in the respiratory and/or the photosynthetic chain. The immediate electron acceptor for the enzyme in this species is believed to be plastoquinone. Couples the redox reaction to proton translocation, and thus conserves the redox energy in a proton gradient. This chain is NAD(P)H-quinone oxidoreductase subunit I, found in Prochlorococcus marinus (strain MIT 9303).